Consider the following 191-residue polypeptide: Large ribosomal subunit protein bL9 (191 aa).

Positions 171–191 (EDALKPEDFFNPEAELESEEE) are disordered.

This sequence belongs to the bacterial ribosomal protein bL9 family.

Binds to the 23S rRNA. This Rhizobium meliloti (strain 1021) (Ensifer meliloti) protein is Large ribosomal subunit protein bL9.